An 817-amino-acid chain; its full sequence is DNA ligase (817 aa).

Residues 45 to 49 (DVEYD), 94 to 95 (SI), and Glu-131 contribute to the NAD(+) site. Residue Lys-133 is the N6-AMP-lysine intermediate of the active site. NAD(+) is bound by residues Arg-154, Glu-193, Lys-311, and Lys-335. Residues Cys-444, Cys-447, Cys-462, and Cys-468 each contribute to the Zn(2+) site. The BRCT domain occupies 733–817 (AEEGVLDGKT…LLKKPAGDQA (85 aa)).

Belongs to the NAD-dependent DNA ligase family. LigA subfamily. Mg(2+) serves as cofactor. The cofactor is Mn(2+).

The enzyme catalyses NAD(+) + (deoxyribonucleotide)n-3'-hydroxyl + 5'-phospho-(deoxyribonucleotide)m = (deoxyribonucleotide)n+m + AMP + beta-nicotinamide D-nucleotide.. In terms of biological role, DNA ligase that catalyzes the formation of phosphodiester linkages between 5'-phosphoryl and 3'-hydroxyl groups in double-stranded DNA using NAD as a coenzyme and as the energy source for the reaction. It is essential for DNA replication and repair of damaged DNA. The polypeptide is DNA ligase (Ralstonia pickettii (strain 12J)).